The sequence spans 1820 residues: MARKFSSARPEMFRRFTPDSLEEIEAFTELKKSCTLEKKEPESTPRIDLEAGKPLPMIYGDPPEDLLNIPLEDLDPFYKTQKTFIVISKGNIINRFNAERALYIFSPFNPIRRGAIRVFVNSAFNFFIMFTIFSNCIFMTISNPPAWSKIVEYTFTGIYTFEVIVKVLSRGFCIGHFTFLRDPWNWLDFSVVTMTYITEFIDLRNVSALRTFRVLRALKTITIFPGLKTIVRALIESMKQMGDVVILTVFSLAVFTLAGMQLFMGNLRHKCIRWPISNVTLDYESAYNTTFDFTAYIENEENQYFLDGALDALLCGNNSDAGKCPEGYTCMKAGRNPNYGYTNYDNFAWTFLCLFRLMLQDYWENLYQMTLRAAGKSYMVFFIMVIFLGSFYLINLILAVVAMAYEEQNQATLAEAQEKEAEFQRAVEQLRIQQEQINDERKASLASQLTQNQEAEITDDGDDAIKECNGKAFPLANIREPSSVKLSTEEQRSDSKSMDSKHSVDKPSLKHKAASTMSVFTLEDLEAARRPCPPVWYKFAGFVFKWNCCGPWVFLKKWVHFVMMDPFTDLFITLCIILNTLFMSIEHHPMNESFQSLLSAGNLVFTTIFAAEMVLKIIALDPYYYFQQTWNIFDSIIVSLSLLELGLSNMQGMSVLRSLRLLRIFKLAKSWPTLNILIKIICNSVGALGNLTIVLAIIVFIFALVGFQLFGKNYKEYVCKISDDCELPRWHMNDFFHSFLIVFRALCGEWIETMWDCMEVGGVPMCLAVYMMVIIIGNLVMLNLFLALLLSSFSSDNLSSIEEDDEVNSLQVASERISRAKNWVKIFITGTVQALVLWIQGKKPPSDDVVGEEGDNEGKKDTLPLNYLDGEKIVDGITNCVESPTLNLPIVKGESEIEEEGLVDSSDEEDTNKKKHALNDEDSSVCSTVDYSPSEQDPLAKEEEEEEEEEPEELESKDPEACFTEKCIWRFPFLDVDITQGKGKIWWNLRRTCYTIVEHDYFETFIIFMILLSSGVLAFEDIYIWRRRVIKVILEYADKVFTYVFIVEMLLKWVAYGFKRYFTDAWCWLDFVIVGASIMGITSSLLGYEELGAIKNLRTIRALRPLRALSRFEGMKVVVRALLGAIPSIMNVLLVCLMFWLIFSIMGVNLFAGKFYRCINTTTDEILPVEEVNNRSDCMALMYTNEVRWVNLKVNYDNAGMGYLSLLQVSTFKGWMDIMYAAVDSREVEDQPIYEINVYMYLYFVIFIVFGAFFTLNLFIGVIIDNFNRQKQKLGGEDLFMTEEQKKYYNAMKKLGSKKAAKCIPRPSNVVQGVVYDIVTQPFTDIFIMALICINMVAMMVESEDQSQVKKDILSQINVIFVIIFTVECLLKLLALRQYFFTVGWNVFDFAVVVISIIGLLLSDIIEKYFVSPTLFRVIRLARIARVLRLIRAAKGIRTLLFALMMSLPALFNIGLLLFLIMFIFSIFGMSNFAYVKKQGGVDDIFNFETFGNSMICLFEITTSAGWDGLLLPTLNTGPPDCDPDVENPGTDVRGNCGNPGKGITFFCSYIILSFLVVVNMYIAIILENFGVAQEESSDLLCEDDFVMFDETWHKFDVHGTQFLDYNDLPRFVNALQEPMRIPNPNRHKLAKMDMYVVMEDKISYLDVLLAVTQEVLGDTTEMEAMRLSIQAKFKKDNPSPTFFEPVVTTLRRKEEEWASVVIQRAFRQYLLMRAVSHASFLSQIKHMNEGPKDGVGSQDSLITQKMNALYRGNPELTMPLEQQIKPMLDKPRMPSLSVPETYPIQIPKEVTNEVILHSAPMVRQNYSYSGAIVVRESIV.

Residues 1–117 are Cytoplasmic-facing; it reads MARKFSSARP…FNPIRRGAIR (117 aa). The I repeat unit spans residues 108–410; the sequence is FNPIRRGAIR…VAMAYEEQNQ (303 aa). The helical transmembrane segment at 118-138 threads the bilayer; that stretch reads VFVNSAFNFFIMFTIFSNCIF. Residues 139–149 lie on the Extracellular side of the membrane; sequence MTISNPPAWSK. A helical membrane pass occupies residues 150–171; sequence IVEYTFTGIYTFEVIVKVLSRG. Over 172-176 the chain is Cytoplasmic; it reads FCIGH. The chain crosses the membrane as a helical span at residues 177–197; sequence FTFLRDPWNWLDFSVVTMTYI. Topologically, residues 198–203 are extracellular; it reads TEFIDL. Residues 204–224 traverse the membrane as a helical; Voltage-sensor segment; the sequence is RNVSALRTFRVLRALKTITIF. The Cytoplasmic portion of the chain corresponds to 225–243; that stretch reads PGLKTIVRALIESMKQMGD. Residues 244-264 form a helical membrane-spanning segment; that stretch reads VVILTVFSLAVFTLAGMQLFM. Topologically, residues 265-346 are extracellular; it reads GNLRHKCIRW…PNYGYTNYDN (82 aa). Cysteines 271 and 324 form a disulfide. 3 N-linked (GlcNAc...) asparagine glycosylation sites follow: N278, N288, and N317. The non-homologous region of repeat I stretch occupies residues 285–342; sequence SAYNTTFDFTAYIENEENQYFLDGALDALLCGNNSDAGKCPEGYTCMKAGRNPNYGYT. Positions 347 to 371 form an intramembrane region, pore-forming; sequence FAWTFLCLFRLMLQDYWENLYQMTL. At 372–378 the chain is on the extracellular side; it reads RAAGKSY. A helical transmembrane segment spans residues 379–402; it reads MVFFIMVIFLGSFYLINLILAVVA. The Cytoplasmic portion of the chain corresponds to 403 to 557; it reads MAYEEQNQAT…CCGPWVFLKK (155 aa). The disordered stretch occupies residues 483 to 507; the sequence is SVKLSTEEQRSDSKSMDSKHSVDKP. Residues 487–507 are compositionally biased toward basic and acidic residues; sequence STEEQRSDSKSMDSKHSVDKP. The II repeat unit spans residues 548-811; that stretch reads CCGPWVFLKK…EEDDEVNSLQ (264 aa). The helical transmembrane segment at 558–578 threads the bilayer; that stretch reads WVHFVMMDPFTDLFITLCIIL. Topologically, residues 579–599 are extracellular; that stretch reads NTLFMSIEHHPMNESFQSLLS. N-linked (GlcNAc...) asparagine glycosylation occurs at N591. A helical membrane pass occupies residues 600-620; it reads AGNLVFTTIFAAEMVLKIIAL. Residues 621-625 lie on the Cytoplasmic side of the membrane; that stretch reads DPYYY. The helical transmembrane segment at 626–643 threads the bilayer; sequence FQQTWNIFDSIIVSLSLL. Topologically, residues 644-650 are extracellular; it reads ELGLSNM. The chain crosses the membrane as a helical; Voltage-sensor span at residues 651-671; it reads QGMSVLRSLRLLRIFKLAKSW. Residues 672–690 lie on the Cytoplasmic side of the membrane; the sequence is PTLNILIKIICNSVGALGN. Residues 691–711 form a helical membrane-spanning segment; it reads LTIVLAIIVFIFALVGFQLFG. Residues 712–734 lie on the Extracellular side of the membrane; it reads KNYKEYVCKISDDCELPRWHMND. The segment at residues 735–755 is an intramembrane region (pore-forming); it reads FFHSFLIVFRALCGEWIETMW. The Extracellular portion of the chain corresponds to 756 to 766; that stretch reads DCMEVGGVPMC. C757 and C766 form a disulfide bridge. The chain crosses the membrane as a helical span at residues 767-790; that stretch reads LAVYMMVIIIGNLVMLNLFLALLL. Topologically, residues 791 to 1004 are cytoplasmic; sequence SSFSSDNLSS…TIVEHDYFET (214 aa). 2 disordered regions span residues 844-864 and 891-959; these read PPSD…DTLP and VKGE…SKDP. The segment covering 896–910 has biased composition (acidic residues); sequence EIEEEGLVDSSDEED. Positions 924-935 are enriched in polar residues; it reads SVCSTVDYSPSE. Over residues 942–953 the composition is skewed to acidic residues; it reads EEEEEEEEEPEE. Residues 988–1295 form an III repeat; sequence NLRRTCYTIV…KKYYNAMKKL (308 aa). A helical membrane pass occupies residues 1005 to 1025; it reads FIIFMILLSSGVLAFEDIYIW. The Extracellular portion of the chain corresponds to 1026-1037; sequence RRRVIKVILEYA. A helical membrane pass occupies residues 1038–1058; sequence DKVFTYVFIVEMLLKWVAYGF. At 1059–1065 the chain is on the cytoplasmic side; sequence KRYFTDA. The helical transmembrane segment at 1066 to 1086 threads the bilayer; that stretch reads WCWLDFVIVGASIMGITSSLL. Residues 1087–1091 lie on the Extracellular side of the membrane; the sequence is GYEEL. Residues 1092–1112 traverse the membrane as a helical; Voltage-sensor segment; the sequence is GAIKNLRTIRALRPLRALSRF. Over 1113 to 1131 the chain is Cytoplasmic; sequence EGMKVVVRALLGAIPSIMN. A helical membrane pass occupies residues 1132–1152; the sequence is VLLVCLMFWLIFSIMGVNLFA. At 1153 to 1199 the chain is on the extracellular side; it reads GKFYRCINTTTDEILPVEEVNNRSDCMALMYTNEVRWVNLKVNYDNA. N-linked (GlcNAc...) asparagine glycosylation is found at N1160 and N1174. Residues 1172–1194 are non-homologous region of repeat III; that stretch reads VNNRSDCMALMYTNEVRWVNLKV. An intramembrane region (pore-forming) is located at residues 1200-1221; the sequence is GMGYLSLLQVSTFKGWMDIMYA. Topologically, residues 1222–1243 are extracellular; sequence AVDSREVEDQPIYEINVYMYLY. A helical membrane pass occupies residues 1244–1264; that stretch reads FVIFIVFGAFFTLNLFIGVII. Residues 1265 to 1320 are Cytoplasmic-facing; the sequence is DNFNRQKQKLGGEDLFMTEEQKKYYNAMKKLGSKKAAKCIPRPSNVVQGVVYDIVT. Residues 1304 to 1602 form an IV repeat; sequence IPRPSNVVQG…WHKFDVHGTQ (299 aa). The helical transmembrane segment at 1321–1341 threads the bilayer; sequence QPFTDIFIMALICINMVAMMV. Residues 1342 to 1352 are Extracellular-facing; that stretch reads ESEDQSQVKKD. A helical membrane pass occupies residues 1353 to 1376; that stretch reads ILSQINVIFVIIFTVECLLKLLAL. Residues 1377 to 1380 lie on the Cytoplasmic side of the membrane; sequence RQYF. Residues 1381–1398 traverse the membrane as a helical segment; it reads FTVGWNVFDFAVVVISII. At 1399-1416 the chain is on the extracellular side; the sequence is GLLLSDIIEKYFVSPTLF. The chain crosses the membrane as a helical; Voltage-sensor span at residues 1417 to 1437; the sequence is RVIRLARIARVLRLIRAAKGI. The Cytoplasmic portion of the chain corresponds to 1438 to 1453; sequence RTLLFALMMSLPALFN. A helical membrane pass occupies residues 1454 to 1474; sequence IGLLLFLIMFIFSIFGMSNFA. Residues 1475–1490 lie on the Extracellular side of the membrane; sequence YVKKQGGVDDIFNFET. Positions 1490-1505 are non-homologous region of repeat IV; sequence TFGNSMICLFEITTSA. An intramembrane region (pore-forming) is located at residues 1491–1513; that stretch reads FGNSMICLFEITTSAGWDGLLLP. At 1514–1543 the chain is on the extracellular side; sequence TLNTGPPDCDPDVENPGTDVRGNCGNPGKG. Residues 1544-1567 traverse the membrane as a helical segment; that stretch reads ITFFCSYIILSFLVVVNMYIAIIL. The Cytoplasmic portion of the chain corresponds to 1568 to 1820; it reads ENFGVAQEES…GAIVVRESIV (253 aa).

This sequence belongs to the sodium channel (TC 1.A.1.10) family.

It is found in the cell membrane. Its function is as follows. Mediates the voltage-dependent sodium ion permeability of excitable membranes. Assuming opened or closed conformations in response to the voltage difference across the membrane, the protein forms a sodium-selective channel through which Na(+) ions may pass in accordance with their electrochemical gradient. In Electrophorus electricus (Electric eel), this protein is Sodium channel protein.